The chain runs to 1280 residues: Papilin (1280 aa).

Residues 1–20 (MQLFPLLFSLLLTSTPGSWA) form the signal peptide. TSP type-1 domains follow at residues 27–81 (SDTW…ESCP), 305–362 (RGFS…QPCP), 363–422 (KTKR…ACNL), 424–482 (HCAV…EACP), and 485–540 (RGQA…QPCH). 3 cysteine pairs are disulfide-bonded: C39–C75, C43–C80, and C54–C65. 3 disulfides stabilise this stretch: C425–C464, C436–C476, and C440–C481. Disordered stretches follow at residues 541 to 626 (LPQE…DCRH) and 672 to 715 (PQQA…PSEC). A compositionally biased stretch (polar residues) spans 585 to 599 (AQSNPREGQDPNLSS). Residues 706–715 (QAHEGEPSEC) show a composition bias toward basic and acidic residues. Cystine bridges form between C750–C800, C759–C783, and C775–C796. The region spanning 750 to 800 (CLLPSAQGSCGDWAARWYFVASVGRCNRFWYGGCHGNANNFASEQECMNTC) is the BPTI/Kunitz inhibitor domain. The interval 800-902 (CRGQHGPRRP…AVPPTHSPSY (103 aa)) is disordered. Positions 879-891 (IRPRVPGLDREAR) are enriched in basic and acidic residues. The Ig-like C2-type 1 domain maps to 900–990 (PSYRIRLAGS…EPQEIQLRVT (91 aa)). Residues C926 and C973 are joined by a disulfide bond. A compositionally biased stretch (basic and acidic residues) spans 1002-1012 (PRHFPEPRNPD). The segment at 1002–1042 (PRHFPEPRNPDLGHGPPHRGTGAEAGGHRVLSPSHPRPATR) is disordered. Ig-like C2-type domains lie at 1039-1128 (PATR…VQLR) and 1133-1218 (LTIT…TEVK). Disulfide bonds link C1065-C1112 and C1154-C1202. The PLAC domain occupies 1231-1270 (LGKDCIDQPELANCALILQAQLCGNEYYSSFCCASCSRFQ).

Belongs to the papilin family.

The protein resides in the secreted. The sequence is that of Papilin (Papln) from Mus musculus (Mouse).